The primary structure comprises 120 residues: Large ribosomal subunit protein uL18 (120 aa).

Belongs to the universal ribosomal protein uL18 family. In terms of assembly, part of the 50S ribosomal subunit; part of the 5S rRNA/L5/L18/L25 subcomplex. Contacts the 5S and 23S rRNAs.

Its function is as follows. This is one of the proteins that bind and probably mediate the attachment of the 5S RNA into the large ribosomal subunit, where it forms part of the central protuberance. In Bacillus pumilus (strain SAFR-032), this protein is Large ribosomal subunit protein uL18.